The following is a 384-amino-acid chain: Histone acetyltransferase type B subunit 2 (384 aa).

5 WD repeats span residues 156-196 (GHSA…SSIS), 203-243 (RHET…CIHA), 247-287 (AHTS…QPLH), 291-331 (GHSK…AEVP), and 348-384 (GHTSTVCDISWNPAEPFEIASVSEDNILQIWQMPQPE).

This sequence belongs to the WD repeat RBAP46/RBAP48/MSI1 family. As to quaternary structure, component of the HAT-B complex.

The protein resides in the cytoplasm. The protein localises to the nucleus. In terms of biological role, regulatory subunit of the histone acetylase B (HAT-B) complex. The complex acetylates histone H4 which is required for telomeric silencing. This is Histone acetyltransferase type B subunit 2 (HAT2) from Encephalitozoon cuniculi (strain GB-M1) (Microsporidian parasite).